A 225-amino-acid polypeptide reads, in one-letter code: MNSIKFPVLDRTTKNSVISTTLNDLSNWSRLSSLWPLLYGTSCCFIEFASLIGSRFDFDRYGLVPRSSPRQADLILTAGTVTMKMAPSLVRLYEQMPEPKYVIAMGACTITGGMFSTDSYSTVRGVDKLIPVDVYLPGCPPKPEAVIDAITKLRKKIAREIYKDQIRPQQGNRCFTTTHKFFVVRSTHTGNYDQELLYPPSSTSEISTETFFKYKSPVSSHELVN.

Residues Cys-43, Cys-44, Cys-108, and Cys-139 each contribute to the [4Fe-4S] cluster site.

This sequence belongs to the complex I 20 kDa subunit family. In terms of assembly, NDH is composed of at least 16 different subunits, 5 of which are encoded in the nucleus. [4Fe-4S] cluster is required as a cofactor.

The protein resides in the plastid. It is found in the chloroplast thylakoid membrane. The enzyme catalyses a plastoquinone + NADH + (n+1) H(+)(in) = a plastoquinol + NAD(+) + n H(+)(out). The catalysed reaction is a plastoquinone + NADPH + (n+1) H(+)(in) = a plastoquinol + NADP(+) + n H(+)(out). NDH shuttles electrons from NAD(P)H:plastoquinone, via FMN and iron-sulfur (Fe-S) centers, to quinones in the photosynthetic chain and possibly in a chloroplast respiratory chain. The immediate electron acceptor for the enzyme in this species is believed to be plastoquinone. Couples the redox reaction to proton translocation, and thus conserves the redox energy in a proton gradient. This chain is NAD(P)H-quinone oxidoreductase subunit K, chloroplastic, found in Arabis hirsuta (Hairy rock-cress).